Reading from the N-terminus, the 370-residue chain is Dual-specificity RNA methyltransferase RlmN (370 aa).

The active-site Proton acceptor is Glu97. One can recognise a Radical SAM core domain in the interval 103-340 (EKSRGTLCIS…CTVRRTRGDD (238 aa)). An intrachain disulfide couples Cys110 to Cys345. [4Fe-4S] cluster-binding residues include Cys117, Cys121, and Cys124. S-adenosyl-L-methionine-binding positions include 170 to 171 (GE), Ser202, 224 to 226 (SLH), and Asn302. Cys345 acts as the S-methylcysteine intermediate in catalysis.

Belongs to the radical SAM superfamily. RlmN family. [4Fe-4S] cluster is required as a cofactor.

The protein localises to the cytoplasm. It carries out the reaction adenosine(2503) in 23S rRNA + 2 reduced [2Fe-2S]-[ferredoxin] + 2 S-adenosyl-L-methionine = 2-methyladenosine(2503) in 23S rRNA + 5'-deoxyadenosine + L-methionine + 2 oxidized [2Fe-2S]-[ferredoxin] + S-adenosyl-L-homocysteine. It catalyses the reaction adenosine(37) in tRNA + 2 reduced [2Fe-2S]-[ferredoxin] + 2 S-adenosyl-L-methionine = 2-methyladenosine(37) in tRNA + 5'-deoxyadenosine + L-methionine + 2 oxidized [2Fe-2S]-[ferredoxin] + S-adenosyl-L-homocysteine. Functionally, specifically methylates position 2 of adenine 2503 in 23S rRNA and position 2 of adenine 37 in tRNAs. m2A2503 modification seems to play a crucial role in the proofreading step occurring at the peptidyl transferase center and thus would serve to optimize ribosomal fidelity. The polypeptide is Dual-specificity RNA methyltransferase RlmN (Hydrogenovibrio crunogenus (strain DSM 25203 / XCL-2) (Thiomicrospira crunogena)).